Consider the following 853-residue polypeptide: Protein translocase subunit SecA (853 aa).

ATP contacts are provided by residues Q77, 95–99 (GEGKT), and D532.

The protein belongs to the SecA family. Monomer and homodimer. Part of the essential Sec protein translocation apparatus which comprises SecA, SecYEG and auxiliary proteins SecDF. Other proteins may also be involved.

The protein localises to the cell inner membrane. It is found in the cytoplasm. It carries out the reaction ATP + H2O + cellular proteinSide 1 = ADP + phosphate + cellular proteinSide 2.. Part of the Sec protein translocase complex. Interacts with the SecYEG preprotein conducting channel. Has a central role in coupling the hydrolysis of ATP to the transfer of proteins into and across the cell membrane, serving as an ATP-driven molecular motor driving the stepwise translocation of polypeptide chains across the membrane. The polypeptide is Protein translocase subunit SecA (Thermosipho melanesiensis (strain DSM 12029 / CIP 104789 / BI429)).